A 67-amino-acid chain; its full sequence is MRDVRPEYWMGLDVAVFLFFATSDVDRHLTVFDHSQSFFTSDRGRVLTLSWGHAGQSSIHCVSISGF.

This is an uncharacterized protein from Vaccinia virus (strain Copenhagen) (VACV).